We begin with the raw amino-acid sequence, 580 residues long: uncharacterized protein (580 aa).

Disordered regions lie at residues 161-241 (SFSP…SVND), 256-281 (LGSL…SFSD), 325-345 (NVSH…QLLK), 472-495 (PRDT…DNSD), and 544-564 (SAVL…KEVR). A compositionally biased stretch (low complexity) spans 192–203 (SNSNSSDTSTDD). Composition is skewed to polar residues over residues 223–241 (THSS…SVND) and 256–269 (LGSL…TAQK). Basic and acidic residues predominate over residues 326–341 (VSHEEKSHSVQDDKSK). The segment covering 481–495 (PNLSQSGNINSDNSD) has biased composition (polar residues).

This is an uncharacterized protein from Schizosaccharomyces pombe (strain 972 / ATCC 24843) (Fission yeast).